We begin with the raw amino-acid sequence, 402 residues long: uncharacterized protein (402 aa).

Over 1-12 the chain is Cytoplasmic; the sequence is MFQQLSASIRHN. A helical transmembrane segment spans residues 13 to 33; that stretch reads AHIIFLCISWYFISSLASQVT. At 34–50 the chain is on the extracellular side; sequence KQVLTVCPLPLFLGEFQ. A helical membrane pass occupies residues 51–71; sequence FIYTAVLAWFTCYIAYSFPGF. Over 72-103 the chain is Cytoplasmic; sequence YRIFPNGTFPEYYIDDRETSRAARKESKLSSL. A helical membrane pass occupies residues 104–124; that stretch reads IIPPSKPILQTVLPLGLFQFV. At 125–134 the chain is on the extracellular side; sequence GKYFGHTATS. A helical membrane pass occupies residues 135–155; it reads LVPVSTVASIKTLSPMFILLL. Over 156-165 the chain is Cytoplasmic; the sequence is QKILKISTLK. A helical transmembrane segment spans residues 166–186; that stretch reads ITLTLIFSLCTLVLGVWIIVQ. At 187 to 206 the chain is on the extracellular side; the sequence is EDNRSPASSNELREFSKYGV. The helical transmembrane segment at 207-227 threads the bilayer; the sequence is ICAMISMFIFVLQNIYGKTVF. The Cytoplasmic segment spans residues 228 to 271; that stretch reads TYRSQTDESQSNSGFSRQESPLPLYEKLDEKLVAKKKPKSYDKL. Residues 272–292 traverse the membrane as a helical segment; that stretch reads TLMIYISLVGFCLSFGWFITL. The Extracellular portion of the chain corresponds to 293-353; sequence EFPVLFRYFF…TYSIANLMKR (61 aa). Residues 354–374 form a helical membrane-spanning segment; sequence FAIIAVSWVFIGRRITWLQVF. Residues 375-402 lie on the Cytoplasmic side of the membrane; that stretch reads GLVLNTLGLFLYERCTSQSKIKAKIRPE.

This sequence belongs to the TPT transporter family.

The protein localises to the membrane. This is an uncharacterized protein from Saccharomyces cerevisiae (strain ATCC 204508 / S288c) (Baker's yeast).